Consider the following 413-residue polypeptide: Serine/threonine-protein phosphatase 2A 55 kDa regulatory subunit B beta isoform (413 aa).

4 WD repeats span residues 1-31, 57-98, 141-179, and 190-230; these read EFNHTGELLATGDKGGRVVIFQREQESKNQV, EIEE…KRPE, AHTYHINSISVNSDYETYMSADDLRINLWNFEITNQSFN, and ELTE…LCDR. At Ser245 the chain carries Phosphoserine. WD repeat units follow at residues 249-287, 304-345, and 380-412; these read EIISSISDVKFSHSGRYIMTRDYLTVKVWDLNMENRPIE, ENDC…DVTL, and DFSKKILHTAWHPSENIIAVAATNNLYIFQDKV. Tyr265 carries the phosphotyrosine modification. Thr268 carries the post-translational modification Phosphothreonine.

This sequence belongs to the phosphatase 2A regulatory subunit B family. In terms of assembly, PP2A consists of a common heterodimeric core enzyme, composed of a 36 kDa catalytic subunit (subunit C) and a 65 kDa constant regulatory subunit (PR65 or subunit A), that associates with a variety of regulatory subunits. Proteins that associate with the core dimer include three families of regulatory subunits B (the R2/B/PR55/B55, R3/B''/PR72/PR130/PR59 and R5/B'/B56 families), the 48 kDa variable regulatory subunit, viral proteins, and cell signaling molecules. Interacts with TOMM22. Interacts with IER5 (via N- and C-terminal regions). In terms of tissue distribution, brain.

Its subcellular location is the cytoplasm. The protein localises to the cytoskeleton. The protein resides in the membrane. The B regulatory subunit might modulate substrate selectivity and catalytic activity, and might also direct the localization of the catalytic enzyme to a particular subcellular compartment. This is Serine/threonine-protein phosphatase 2A 55 kDa regulatory subunit B beta isoform (PPP2R2B) from Oryctolagus cuniculus (Rabbit).